The primary structure comprises 132 residues: Histone H2A.1 (132 aa).

Serine 2 is subject to N-acetylserine. N6-acetyllysine occurs at positions 5 and 8. An N6-succinyllysine mark is found at lysine 14 and lysine 22. Glutamine 106 bears the N5-methylglutamine mark. Position 120 is an N6-malonyllysine; alternate (lysine 120). Residue lysine 127 forms a Glycyl lysine isopeptide (Lys-Gly) (interchain with G-Cter in SUMO) linkage. Serine 129 is subject to Phosphoserine. The [ST]-Q motif motif lies at 129 to 130 (SQ).

This sequence belongs to the histone H2A family. In terms of assembly, the nucleosome is a histone octamer containing two molecules each of H2A, H2B, H3 and H4 assembled in one H3-H4 heterotetramer and two H2A-H2B heterodimers. The octamer wraps approximately 147 bp of DNA. Phosphorylated to form H2AS128ph (gamma-H2A) in response to DNA double-strand breaks (DSBs) generated by exogenous genotoxic agents and by stalled replication forks. Phosphorylation is dependent on the DNA damage checkpoint kinases MEC1/ATR and TEL1/ATM, spreads on either side of a detected DSB site and may mark the surrounding chromatin for recruitment of proteins required for DNA damage signaling and repair. Gamma-H2A interacts with ARP4, a shared component of the NuA4 histone acetyltransferase complex and the INO80 and SWR1 chromatin remodeling complexes, and serves to recruit first NuA4, mediating histone H4 acetylation, and subsequently the INO80/SWR1 complexes, facilitating DNA resection, to DSB sites. Gamma-H2A is required for sequestering cohesin around the break site, which is important for efficient post-replicative double-strand break repair by homologous recombination, holding the damaged chromatid close to its undamaged sister template. Gamma-H2A is removed from the DNA prior to the strand invasion-primer extension step of the repair process and subsequently dephosphorylated by PPH3, a component of the histone H2A phosphatase complex (HTP-C). Dephosphorylation is necessary for efficient recovery from the DNA damage checkpoint. Post-translationally, N-acetylated by NAT4. In terms of processing, acetylated by ESA1, a component of the NuA4 histone acetyltransferase (HAT) complex, to form H2AK4ac and H2AK7ac. Glutamine methylation at Gln-106 (H2AQ105me) by NOP1 is specifically dedicated to polymerase I. It is present at 35S ribosomal DNA locus and impairs binding of the FACT complex. Post-translationally, sumoylated to from H2AK126su. May lead to transcriptional repression.

It is found in the nucleus. It localises to the chromosome. Functionally, core component of nucleosome which plays a central role in DNA double strand break (DSB) repair. Nucleosomes wrap and compact DNA into chromatin, limiting DNA accessibility to the cellular machineries which require DNA as a template. Histones thereby play a central role in transcription regulation, DNA repair, DNA replication and chromosomal stability. DNA accessibility is regulated via a complex set of post-translational modifications of histones, also called histone code, and nucleosome remodeling. In Saccharomyces cerevisiae (strain ATCC 204508 / S288c) (Baker's yeast), this protein is Histone H2A.1 (HTA1).